A 544-amino-acid chain; its full sequence is CTP synthase (544 aa).

Positions 1 to 266 are amidoligase domain; sequence MKKRFIFITG…DQIICHHFKL (266 aa). Ser14 serves as a coordination point for CTP. Position 14 (Ser14) interacts with UTP. ATP is bound by residues 15 to 20 and Asp72; that span reads SLGKGI. Residues Asp72 and Glu140 each contribute to the Mg(2+) site. CTP is bound by residues 147-149, 187-192, and Lys223; these read DIE and KTKPTQ. UTP-binding positions include 187 to 192 and Lys223; that span reads KTKPTQ. One can recognise a Glutamine amidotransferase type-1 domain in the interval 291 to 541; that stretch reads TIGIIGKYIK…IKAAIQYKKI (251 aa). Residue Gly352 coordinates L-glutamine. The Nucleophile; for glutamine hydrolysis role is filled by Cys379. L-glutamine-binding positions include 380–383, Glu403, and Arg469; that span reads LGMQ. Catalysis depends on residues His514 and Glu516.

The protein belongs to the CTP synthase family. In terms of assembly, homotetramer.

The catalysed reaction is UTP + L-glutamine + ATP + H2O = CTP + L-glutamate + ADP + phosphate + 2 H(+). The enzyme catalyses L-glutamine + H2O = L-glutamate + NH4(+). It catalyses the reaction UTP + NH4(+) + ATP = CTP + ADP + phosphate + 2 H(+). It participates in pyrimidine metabolism; CTP biosynthesis via de novo pathway; CTP from UDP: step 2/2. Allosterically activated by GTP, when glutamine is the substrate; GTP has no effect on the reaction when ammonia is the substrate. The allosteric effector GTP functions by stabilizing the protein conformation that binds the tetrahedral intermediate(s) formed during glutamine hydrolysis. Inhibited by the product CTP, via allosteric rather than competitive inhibition. Its function is as follows. Catalyzes the ATP-dependent amination of UTP to CTP with either L-glutamine or ammonia as the source of nitrogen. Regulates intracellular CTP levels through interactions with the four ribonucleotide triphosphates. The chain is CTP synthase from Buchnera aphidicola subsp. Baizongia pistaciae (strain Bp).